The following is a 287-amino-acid chain: MGIRAFRPYTPGTRERVVSDYAEITRNEPEKSLLVSKHRRKGRNNRGVITCRHRGGGHKRLYRIIDFKRDKRNVPGKIVSIEYDPNRNARISLVYYEDGEKRYILTPAGVHVGTPIIAGDETPIEVGNAMPLQNIPLGTTVHNVELVAGKGGQIVRAAGASAQVVAKEGNYVALKLPSTEVRLVRKECYATIGAVGNAEVRNTSLGKAGRKRWLGRRPEVRGSVMNPVDHPHGGGEGRAPIGRSGPVTPWGKPALGRKTRKKNKQSDRLIQRRRRKSSKRGRGGRDA.

The segment at 214–287 (LGRRPEVRGS…SKRGRGGRDA (74 aa)) is disordered. The segment covering 271–287 (QRRRRKSSKRGRGGRDA) has biased composition (basic residues).

This sequence belongs to the universal ribosomal protein uL2 family. In terms of assembly, part of the 50S ribosomal subunit. Forms a bridge to the 30S subunit in the 70S ribosome.

One of the primary rRNA binding proteins. Required for association of the 30S and 50S subunits to form the 70S ribosome, for tRNA binding and peptide bond formation. It has been suggested to have peptidyltransferase activity; this is somewhat controversial. Makes several contacts with the 16S rRNA in the 70S ribosome. The chain is Large ribosomal subunit protein uL2 from Synechococcus elongatus (strain ATCC 33912 / PCC 7942 / FACHB-805) (Anacystis nidulans R2).